The following is a 492-amino-acid chain: Probable cobyric acid synthase (492 aa).

A GATase cobBQ-type domain is found at 252 to 444; it reads PIEVNIVKFS…FHGILENFEF (193 aa). The active-site Nucleophile is Cys330. Residue His436 is part of the active site.

This sequence belongs to the CobB/CobQ family. CobQ subfamily.

The protein operates within cofactor biosynthesis; adenosylcobalamin biosynthesis. Functionally, catalyzes amidations at positions B, D, E, and G on adenosylcobyrinic A,C-diamide. NH(2) groups are provided by glutamine, and one molecule of ATP is hydrogenolyzed for each amidation. This is Probable cobyric acid synthase from Methanococcus maripaludis (strain C6 / ATCC BAA-1332).